We begin with the raw amino-acid sequence, 77 residues long: U8-lycotoxin-Ls1q (77 aa).

The first 20 residues, 1–20 (MKLMIFAGLVLFAIVSLIEA), serve as a signal peptide directing secretion. Positions 21–26 (QAEHEK) are excised as a propeptide.

It belongs to the neurotoxin 19 (CSTX) family. 08 (U8-Lctx) subfamily. In terms of processing, contains 4 disulfide bonds. As to expression, expressed by the venom gland.

It localises to the secreted. This chain is U8-lycotoxin-Ls1q, found in Lycosa singoriensis (Wolf spider).